Here is a 231-residue protein sequence, read N- to C-terminus: Large ribosomal subunit protein uL1 (231 aa).

Belongs to the universal ribosomal protein uL1 family. Part of the 50S ribosomal subunit.

Functionally, binds directly to 23S rRNA. The L1 stalk is quite mobile in the ribosome, and is involved in E site tRNA release. Protein L1 is also a translational repressor protein, it controls the translation of the L11 operon by binding to its mRNA. The protein is Large ribosomal subunit protein uL1 of Pseudomonas entomophila (strain L48).